The following is a 182-amino-acid chain: MNEWLNVAPELLALLIFVSRVIDVSLGTFRTIVIFRGYKALAAFIGFFEIMIWLVAAGQVFKNLDQWYLALAYAGGFSMGNYVGMWIENRFAIGNELVRCLSFNRDVLAEKIREQGFKVISFDGDMGTDKLVELLFIVEKRRNVPALIKLIKELDASAVYSVSDVKSVYEGPEPLPRRLFFR.

Transmembrane regions (helical) follow at residues 7–27 (VAPELLALLIFVSRVIDVSLG), 41–61 (LAAFIGFFEIMIWLVAAGQVF), and 67–87 (WYLALAYAGGFSMGNYVGMWI).

The protein belongs to the UPF0316 family.

It localises to the cell membrane. This chain is UPF0316 protein Sde_0566, found in Saccharophagus degradans (strain 2-40 / ATCC 43961 / DSM 17024).